The chain runs to 149 residues: Transcriptional repressor NrdR (149 aa).

The segment at 3–34 (CPFCFAVDTKVIDSRLVGEGSSVRRRRQCLVC) is a zinc-finger region. In terms of domain architecture, ATP-cone spans 49–139 (PRVVKSNDVR…VYRSFEDIKE (91 aa)).

This sequence belongs to the NrdR family. Zn(2+) is required as a cofactor.

In terms of biological role, negatively regulates transcription of bacterial ribonucleotide reductase nrd genes and operons by binding to NrdR-boxes. This Escherichia fergusonii (strain ATCC 35469 / DSM 13698 / CCUG 18766 / IAM 14443 / JCM 21226 / LMG 7866 / NBRC 102419 / NCTC 12128 / CDC 0568-73) protein is Transcriptional repressor NrdR.